Reading from the N-terminus, the 247-residue chain is 3-deoxy-manno-octulosonate cytidylyltransferase (247 aa).

It belongs to the KdsB family.

Its subcellular location is the cytoplasm. It carries out the reaction 3-deoxy-alpha-D-manno-oct-2-ulosonate + CTP = CMP-3-deoxy-beta-D-manno-octulosonate + diphosphate. It functions in the pathway nucleotide-sugar biosynthesis; CMP-3-deoxy-D-manno-octulosonate biosynthesis; CMP-3-deoxy-D-manno-octulosonate from 3-deoxy-D-manno-octulosonate and CTP: step 1/1. The protein operates within bacterial outer membrane biogenesis; lipopolysaccharide biosynthesis. In terms of biological role, activates KDO (a required 8-carbon sugar) for incorporation into bacterial lipopolysaccharide in Gram-negative bacteria. The protein is 3-deoxy-manno-octulosonate cytidylyltransferase of Afipia carboxidovorans (strain ATCC 49405 / DSM 1227 / KCTC 32145 / OM5) (Oligotropha carboxidovorans).